The following is a 759-amino-acid chain: Rab guanine nucleotide exchange factor SEC2 (759 aa).

Methionine 1 carries the post-translational modification N-acetylmethionine. Positions aspartate 26–glutamate 164 form a coiled coil. At threonine 168 the chain carries Phosphothreonine. Serine 171 is modified (phosphoserine). Residues threonine 451–glycine 508 form a required for proper polarized localization of the protein region. Position 515 is a phosphoserine (serine 515). Positions lysine 538 to glutamine 759 are disordered. Residues phenylalanine 555–serine 576 show a composition bias toward acidic residues. 2 stretches are compositionally biased toward low complexity: residues serine 577 to serine 589 and leucine 597 to serine 612. Positions arginine 648 to lysine 664 are enriched in basic residues. A coiled-coil region spans residues isoleucine 651–isoleucine 682. Positions alanine 690–alanine 703 are enriched in polar residues. Positions serine 704 to leucine 719 are enriched in basic and acidic residues. Positions glutamate 731 to alanine 744 are enriched in polar residues. Positions glutamine 732 to glutamine 759 form a coiled coil. A compositionally biased stretch (acidic residues) spans aspartate 750–glutamine 759.

This sequence belongs to the SEC2 family. As to quaternary structure, interacts with SEC4. Interacts with YPT32, preferentially in its GTP-bound form.

The protein localises to the bud neck. Its subcellular location is the bud tip. It is found in the cytoplasmic vesicle. The protein resides in the secretory vesicle. Functionally, guanine nucleotide exchange factor for SEC4, catalyzing the dissociation of GDP from SEC4 and also potently promoting binding of GTP. Activation of SEC4 by SEC2 is needed for the directed transport of vesicles to sites of exocytosis. Binds the Rab GTPase YPT32, but does not have exchange activity on YPT32. The protein is Rab guanine nucleotide exchange factor SEC2 (SEC2) of Saccharomyces cerevisiae (strain ATCC 204508 / S288c) (Baker's yeast).